Reading from the N-terminus, the 963-residue chain is Transcription factor cbf12 (963 aa).

Disordered stretches follow at residues 130–207 (NPSN…SQGL) and 248–289 (VNMN…PPQK). 2 stretches are compositionally biased toward polar residues: residues 143 to 207 (FENN…SQGL) and 249 to 289 (NMNS…PPQK).

It belongs to the Su(H) family.

It is found in the nucleus. Its function is as follows. Transcription factor which function may be to trigger the increase of adhesion at stationary phase, possibly by counteracting or replacing cbf11 at the respective promoters. May also play a cbf11-antagonistic role in the regulation of a number of other important processes such as extracellular material production, colony morphogenesis, ploidy maintenance, or meiosis. This Schizosaccharomyces pombe (strain 972 / ATCC 24843) (Fission yeast) protein is Transcription factor cbf12 (cbf12).